The sequence spans 149 residues: Protegrin-1 (149 aa).

A signal peptide spans 1-29 (METQRASLCLGRWSLWLLLLALVVPSASA). A propeptide spanning residues 30–130 (QALSYREAVL…DITCNEVQGV (101 aa)) is cleaved from the precursor. Residues 61–80 (DQPPKADEDPGTPKPVSFTV) form a disordered region. 4 disulfide bridges follow: Cys85–Cys96, Cys107–Cys124, Cys136–Cys145, and Cys138–Cys143. The residue at position 148 (Arg148) is an Arginine amide.

It belongs to the cathelicidin family.

It is found in the secreted. Functionally, microbicidal activity. Active against E.coli, Listeria monocytogenes and C.albicans, in vitro. This is Protegrin-1 (NPG1) from Sus scrofa (Pig).